A 496-amino-acid polypeptide reads, in one-letter code: Squalene epoxidase ERG1 (496 aa).

The Cytoplasmic segment spans residues methionine 1–threonine 16. The helical transmembrane segment at isoleucine 17–leucine 37 threads the bilayer. Residues valine 28–isoleucine 29, glutamate 48–arginine 49, arginine 56, and arginine 158 each bind FAD. The Lumenal segment spans residues alanine 38–glutamate 474. Glycyl lysine isopeptide (Lys-Gly) (interchain with G-Cter in ubiquitin) cross-links involve residues lysine 284, lysine 289, and lysine 311. FAD is bound by residues aspartate 335 and methionine 348. The helical transmembrane segment at glycine 475–isoleucine 495 threads the bilayer. Position 496 (glycine 496) is a topological domain, cytoplasmic.

This sequence belongs to the squalene monooxygenase family. As to quaternary structure, interacts with ERG28. It depends on FAD as a cofactor.

Its subcellular location is the microsome membrane. The protein localises to the endoplasmic reticulum membrane. It localises to the lipid droplet. It catalyses the reaction squalene + reduced [NADPH--hemoprotein reductase] + O2 = (S)-2,3-epoxysqualene + oxidized [NADPH--hemoprotein reductase] + H2O + H(+). Its pathway is terpene metabolism; lanosterol biosynthesis; lanosterol from farnesyl diphosphate: step 2/3. Inhibited by the allylamine antimycotic drugs. Functionally, squalene epoxidase; part of the third module of ergosterol biosynthesis pathway that includes the late steps of the pathway. ERG1 catalyzes the epoxidation of squalene into 2,3-epoxysqualene. The third module or late pathway involves the ergosterol synthesis itself through consecutive reactions that mainly occur in the endoplasmic reticulum (ER) membrane. Firstly, the squalene synthase ERG9 catalyzes the condensation of 2 farnesyl pyrophosphate moieties to form squalene, which is the precursor of all steroids. Squalene synthase is crucial for balancing the incorporation of farnesyl diphosphate (FPP) into sterol and nonsterol isoprene synthesis. Secondly, the squalene epoxidase ERG1 catalyzes the stereospecific oxidation of squalene to (S)-2,3-epoxysqualene, which is considered to be a rate-limiting enzyme in steroid biosynthesis. Then, the lanosterol synthase ERG7 catalyzes the cyclization of (S)-2,3 oxidosqualene to lanosterol, a reaction that forms the sterol core. In the next steps, lanosterol is transformed to zymosterol through a complex process involving various demethylation, reduction and desaturation reactions. The lanosterol 14-alpha-demethylase ERG11 (also known as CYP51) catalyzes C14-demethylation of lanosterol to produce 4,4'-dimethyl cholesta-8,14,24-triene-3-beta-ol, which is critical for ergosterol biosynthesis. The C-14 reductase ERG24 reduces the C14=C15 double bond of 4,4-dimethyl-cholesta-8,14,24-trienol to produce 4,4-dimethyl-cholesta-8,24-dienol. 4,4-dimethyl-cholesta-8,24-dienol is substrate of the C-4 demethylation complex ERG25-ERG26-ERG27 in which ERG25 catalyzes the three-step monooxygenation required for the demethylation of 4,4-dimethyl and 4alpha-methylsterols, ERG26 catalyzes the oxidative decarboxylation that results in a reduction of the 3-beta-hydroxy group at the C-3 carbon to an oxo group, and ERG27 is responsible for the reduction of the keto group on the C-3. ERG28 has a role as a scaffold to help anchor ERG25, ERG26 and ERG27 to the endoplasmic reticulum and ERG29 regulates the activity of the iron-containing C4-methylsterol oxidase ERG25. Then, the sterol 24-C-methyltransferase ERG6 catalyzes the methyl transfer from S-adenosyl-methionine to the C-24 of zymosterol to form fecosterol. The C-8 sterol isomerase ERG2 catalyzes the reaction which results in unsaturation at C-7 in the B ring of sterols and thus converts fecosterol to episterol. The sterol-C5-desaturase ERG3 then catalyzes the introduction of a C-5 double bond in the B ring to produce 5-dehydroepisterol. The C-22 sterol desaturase ERG5 further converts 5-dehydroepisterol into ergosta-5,7,22,24(28)-tetraen-3beta-ol by forming the C-22(23) double bond in the sterol side chain. Finally, ergosta-5,7,22,24(28)-tetraen-3beta-ol is substrate of the C-24(28) sterol reductase ERG4 to produce ergosterol. The polypeptide is Squalene epoxidase ERG1 (Saccharomyces cerevisiae (strain ATCC 204508 / S288c) (Baker's yeast)).